The following is a 308-amino-acid chain: Acetylglutamate kinase (308 aa).

Substrate is bound by residues 86–87, Arg108, and Asn201; that span reads GG.

The protein belongs to the acetylglutamate kinase family. ArgB subfamily.

The protein localises to the cytoplasm. The enzyme catalyses N-acetyl-L-glutamate + ATP = N-acetyl-L-glutamyl 5-phosphate + ADP. The protein operates within amino-acid biosynthesis; L-arginine biosynthesis; N(2)-acetyl-L-ornithine from L-glutamate: step 2/4. Catalyzes the ATP-dependent phosphorylation of N-acetyl-L-glutamate. This Prochlorococcus marinus (strain MIT 9303) protein is Acetylglutamate kinase.